The sequence spans 532 residues: E3 ubiquitin-protein ligase ICP0 (532 aa).

Zn(2+) contacts are provided by Cys-8, Cys-11, Cys-24, His-26, Cys-29, Cys-32, Cys-43, and Cys-46. The segment at Cys-8–Lys-47 adopts an RING-type zinc-finger fold. Disordered stretches follow at residues Glu-206 to Pro-391, Ala-406 to Arg-426, Glu-461 to Gly-498, and Gln-510 to Gln-532. Acidic residues-rich tracts occupy residues Ser-217–Val-227 and Asp-234–Ser-243. Basic residues predominate over residues Arg-286–Pro-295.

In terms of processing, auto-ubiquitinated.

The catalysed reaction is S-ubiquitinyl-[E2 ubiquitin-conjugating enzyme]-L-cysteine + [acceptor protein]-L-lysine = [E2 ubiquitin-conjugating enzyme]-L-cysteine + N(6)-ubiquitinyl-[acceptor protein]-L-lysine.. Functionally, evades nuclear antiviral defenses triggered by dsDNA viruses. Acts during the initial stages of lytic infection and the reactivation of latent viral genome. Prevents the antiviral effect of nuclear bodies by degrading host PML and SP100. The chain is E3 ubiquitin-protein ligase ICP0 (63) from Equus caballus (Horse).